The primary structure comprises 211 residues: Prolactin-3C1 (211 aa).

The N-terminal stretch at 1 to 29 (MQLSLTQARTWKGLLLLVSCMILWISVTP) is a signal peptide. Residues Asn-77 and Asn-173 are each glycosylated (N-linked (GlcNAc...) asparagine). A disulfide bond links Cys-80 and Cys-187.

It belongs to the somatotropin/prolactin family. As to expression, expressed exclusively in decidual tissue.

It localises to the secreted. The sequence is that of Prolactin-3C1 (Prl3c1) from Rattus norvegicus (Rat).